A 489-amino-acid polypeptide reads, in one-letter code: MSKEVRVRYAPSPTGHLHIGNARTALFNYLYAKHFDGKFIIRTEDTDDKRNVEGGEESQLKYLKWLGLQWDEGADIGGEYGPYRQTERLDIYQEYLNELFAKNLAYKCYMTEDELEAEREEQRQNGQVPKYSGAHRDLTPEQIEQFEAEGRQPSIRFRVPENTTYTFNDLVRGKITFESSDFGDWVIVKKNGIPTYNFAVAIDDHLMKISDVLRGEEHISNTPKQMMIFDAFGWEAPRYGHMTLILNEERKKLSKRDEHILQFIEQYRNLGYLPEAMFNFISLLGWSPVGEEEMFTQAQLIEIFDPERLSTSAAIFDQHKLKWMNNEYIKAADLDRVIDLALPHLIKAGKLSEDMDDETRQWAENVISLYREQLRYGAEIVELTELFFQKEISYDEEAKEVLNGEQVPEVLQVFTDKLIHLESFDKDAIKAQFKATQKETGHRGKKLFMPIRVATTGQMHGPELPFAIELLGRDIILNRLDKLLKEMGA.

Positions P11–N21 match the 'HIGH' region motif. The 'KMSKS' region signature appears at K252–R256. Position 255 (K255) interacts with ATP.

Belongs to the class-I aminoacyl-tRNA synthetase family. Glutamate--tRNA ligase type 1 subfamily. As to quaternary structure, monomer.

Its subcellular location is the cytoplasm. The catalysed reaction is tRNA(Glu) + L-glutamate + ATP = L-glutamyl-tRNA(Glu) + AMP + diphosphate. Catalyzes the attachment of glutamate to tRNA(Glu) in a two-step reaction: glutamate is first activated by ATP to form Glu-AMP and then transferred to the acceptor end of tRNA(Glu). In Oceanobacillus iheyensis (strain DSM 14371 / CIP 107618 / JCM 11309 / KCTC 3954 / HTE831), this protein is Glutamate--tRNA ligase.